The chain runs to 239 residues: Ankyrin repeat domain-containing protein 49 (239 aa).

A Phosphoserine modification is found at Ser49. ANK repeat units follow at residues 73 to 103 (DPSR…HVNT), 107 to 136 (DEYT…DVHA), 140 to 169 (DGWT…DINA), and 173 to 206 (GLLT…GLKN).

As to expression, widely expressed in fetus, at a high level in fetal liver, brain and lung.

The protein resides in the nucleus. In terms of biological role, induces HBG1 expression. May have a role in spermatogenesis where it promotes autophagy in response to serum starvation, via the NF-kappaB pathway. In Homo sapiens (Human), this protein is Ankyrin repeat domain-containing protein 49 (ANKRD49).